Reading from the N-terminus, the 156-residue chain is Small ribosomal subunit protein uS7 (156 aa).

Belongs to the universal ribosomal protein uS7 family. As to quaternary structure, part of the 30S ribosomal subunit. Contacts proteins S9 and S11.

In terms of biological role, one of the primary rRNA binding proteins, it binds directly to 16S rRNA where it nucleates assembly of the head domain of the 30S subunit. Is located at the subunit interface close to the decoding center, probably blocks exit of the E-site tRNA. The polypeptide is Small ribosomal subunit protein uS7 (Enterobacter sp. (strain 638)).